We begin with the raw amino-acid sequence, 206 residues long: Inner membrane protein YnjF (206 aa).

Residues 1 to 37 lie on the Periplasmic side of the membrane; that stretch reads MLDRHLHPRIKPLLHQCVRVLDKPGITPDGLTLVGFA. The helical transmembrane segment at 38-60 threads the bilayer; it reads IGVLALPFLALGWYLAALVVILL. The Cytoplasmic portion of the chain corresponds to 61-79; that stretch reads NRLLDGLDGALARRRELTD. Residues 80 to 102 form a helical membrane-spanning segment; the sequence is AGGFLDISLDFLFYALVPFGFIL. At 103–111 the chain is on the periplasmic side; the sequence is AAPEQNALA. A helical transmembrane segment spans residues 112–134; it reads GGWLLFAFIGTGSSFLAFAALAA. Topologically, residues 135-146 are cytoplasmic; that stretch reads KHQIDNPGYAHK. Residues 147-169 traverse the membrane as a helical segment; that stretch reads SFYYLGGLTEGTETILLFVLGCL. The Periplasmic segment spans residues 170-173; that stretch reads FPAW. A helical membrane pass occupies residues 174–196; that stretch reads FAWFAWIFGALCWMTTFTRVWSG. Residues 197–206 lie on the Cytoplasmic side of the membrane; the sequence is YLTLKSLQRQ.

This sequence belongs to the CDP-alcohol phosphatidyltransferase class-I family.

It is found in the cell inner membrane. The polypeptide is Inner membrane protein YnjF (ynjF) (Escherichia coli (strain K12)).